A 181-amino-acid chain; its full sequence is ATP synthase subunit b (181 aa).

The chain crosses the membrane as a helical span at residues 16–36 (LIPPIPELVIGLIAFVIVFGF).

This sequence belongs to the ATPase B chain family. F-type ATPases have 2 components, F(1) - the catalytic core - and F(0) - the membrane proton channel. F(1) has five subunits: alpha(3), beta(3), gamma(1), delta(1), epsilon(1). F(0) has three main subunits: a(1), b(2) and c(10-14). The alpha and beta chains form an alternating ring which encloses part of the gamma chain. F(1) is attached to F(0) by a central stalk formed by the gamma and epsilon chains, while a peripheral stalk is formed by the delta and b chains.

Its subcellular location is the cell membrane. In terms of biological role, f(1)F(0) ATP synthase produces ATP from ADP in the presence of a proton or sodium gradient. F-type ATPases consist of two structural domains, F(1) containing the extramembraneous catalytic core and F(0) containing the membrane proton channel, linked together by a central stalk and a peripheral stalk. During catalysis, ATP synthesis in the catalytic domain of F(1) is coupled via a rotary mechanism of the central stalk subunits to proton translocation. Functionally, component of the F(0) channel, it forms part of the peripheral stalk, linking F(1) to F(0). This chain is ATP synthase subunit b, found in Streptomyces lividans.